A 669-amino-acid chain; its full sequence is DNA ligase (669 aa).

NAD(+)-binding positions include 32–36 (DAEYD), 81–82 (SL), and E111. The active-site N6-AMP-lysine intermediate is the K113. NAD(+) is bound by residues R134, E171, K290, and K314. 4 residues coordinate Zn(2+): C408, C411, C426, and C432. Residues 591-669 (EEALSLKGQT…EAELLAILGS (79 aa)) enclose the BRCT domain.

This sequence belongs to the NAD-dependent DNA ligase family. LigA subfamily. The cofactor is Mg(2+). Requires Mn(2+) as cofactor.

It carries out the reaction NAD(+) + (deoxyribonucleotide)n-3'-hydroxyl + 5'-phospho-(deoxyribonucleotide)m = (deoxyribonucleotide)n+m + AMP + beta-nicotinamide D-nucleotide.. Functionally, DNA ligase that catalyzes the formation of phosphodiester linkages between 5'-phosphoryl and 3'-hydroxyl groups in double-stranded DNA using NAD as a coenzyme and as the energy source for the reaction. It is essential for DNA replication and repair of damaged DNA. The protein is DNA ligase of Shewanella loihica (strain ATCC BAA-1088 / PV-4).